We begin with the raw amino-acid sequence, 309 residues long: uncharacterized protein (309 aa).

The protein belongs to the OprB family.

This is an uncharacterized protein from Aquifex aeolicus (strain VF5).